A 218-amino-acid chain; its full sequence is Oocyte-specific homeobox protein 7 (218 aa).

Residues Ser40–Ser72 are compositionally biased toward polar residues. Residues Ser40–Leu77 are disordered. The homeobox DNA-binding region spans Phe94–Asn153.

This sequence belongs to the paired homeobox family. Obox subfamily. Specifically expressed in oocytes and early embryos.

Its subcellular location is the nucleus. In terms of biological role, transcription factor required for zygotic genome activation (ZGA), a critical event in early embryonic development during which the developmental control passes from maternally provided mRNAs to the expression of the zygotic genome after fertilization. Together with other Obox family members, required in early two-cell stage embryos to kick-start the major ZGA wave by facilitating RNA Polymerase II 'pre-configuration', during which RNA Polymerase II relocates from the initial one-cell stage binding targets to ZGA gene promoters and distal enhancers. Mechanistically, promotes recruitment of RNA Polymerase II from (CG-rich) non-ZGA genes to (CG-poor) ZGA genes at the two-cell stage. Binds to regulatory DNA sequences containing a 5'-ACNCCTTTAATCCCAG-3' sequence motif. Most maternal and zygotic Obox family proteins can compensate for one another. This Mus musculus (Mouse) protein is Oocyte-specific homeobox protein 7.